Consider the following 336-residue polypeptide: tRNA pseudouridine synthase D (336 aa).

Aspartate 84 acts as the Nucleophile in catalysis. Positions 164 to 298 (GVPNYFGEQR…TPSYRWLVGD (135 aa)) constitute a TRUD domain.

It belongs to the pseudouridine synthase TruD family.

The enzyme catalyses uridine(13) in tRNA = pseudouridine(13) in tRNA. Its function is as follows. Responsible for synthesis of pseudouridine from uracil-13 in transfer RNAs. The chain is tRNA pseudouridine synthase D from Cellvibrio japonicus (strain Ueda107) (Pseudomonas fluorescens subsp. cellulosa).